The primary structure comprises 348 residues: Zinc transporter ZIP13 (348 aa).

The Cytoplasmic segment spans residues 1–45 (MMIQTAVAQAKTAPAGPGPWSIKDLVDLQYLDELMSIDNLDVWFC). The helical transmembrane segment at 46-66 (SLVGSIAIGLSGIFPLLVIPI) threads the bilayer. The Lumenal portion of the chain corresponds to 67 to 83 (EAGTALKTEAGCQKLKK). The helical transmembrane segment at 84–104 (LLSFAIGGLLGDVFLHLLPEA) threads the bilayer. Topologically, residues 105–118 (WAYTSSPGGSHRHY) are cytoplasmic. A helical membrane pass occupies residues 119–139 (CTQGLWVIGGLMSFLTLEKMF). Residues 140-219 (PDEVGDPETK…CIDNFTHGLA (80 aa)) are Lumenal-facing. A disordered region spans residues 144–192 (GDPETKTSFQRTTSSSSDLSSQFSVSPQTNGICSNNNSDSKPKTDISPY). Residues 149–169 (KTSFQRTTSSSSDLSSQFSVS) are compositionally biased toward low complexity. The span at 170 to 182 (PQTNGICSNNNSD) shows a compositional bias: polar residues. A helical transmembrane segment spans residues 220–240 (VAGSFLVSRKVGFLTTFAILL). Residues 241 to 246 (HEIPHE) carry the XEXPHE-motif motif. Residues 241–262 (HEIPHEVGDFAILLRAGFDRWK) lie on the Cytoplasmic side of the membrane. Residues 263–283 (AARMQLSTALGGVLGACFALC) form a helical membrane-spanning segment. The Lumenal portion of the chain corresponds to 284-294 (SQSQHGAENAT). Residues 295–315 (TWILPFTSGGFLYIALVNVVP) traverse the membrane as a helical segment. Over 316–326 (DLLEETNPRNS) the chain is Cytoplasmic. A helical membrane pass occupies residues 327-347 (LLQVLLLFSGIGVMALLSIAM). Aspartate 348 is a topological domain (lumenal).

This sequence belongs to the ZIP transporter (TC 2.A.5) family. Homodimer.

It is found in the golgi apparatus membrane. The protein localises to the cytoplasmic vesicle membrane. It localises to the endoplasmic reticulum membrane. It carries out the reaction Zn(2+)(in) = Zn(2+)(out). In terms of biological role, functions as a zinc transporter transporting Zn(2+) from the Golgi apparatus to the cytosol and thus influences the zinc level at least in areas of the cytosol. This chain is Zinc transporter ZIP13, found in Danio rerio (Zebrafish).